We begin with the raw amino-acid sequence, 249 residues long: Phosphate import ATP-binding protein PstB (249 aa).

In terms of domain architecture, ABC transporter spans 4 to 244 (VKIKDLSLFY…PQDKRTEDYI (241 aa)). Residue 36–43 (GPSGCGKS) coordinates ATP.

The protein belongs to the ABC transporter superfamily. Phosphate importer (TC 3.A.1.7) family. In terms of assembly, the complex is composed of two ATP-binding proteins (PstB), two transmembrane proteins (PstC and PstA) and a solute-binding protein (PstS).

The protein localises to the cell membrane. It catalyses the reaction phosphate(out) + ATP + H2O = ADP + 2 phosphate(in) + H(+). Part of the ABC transporter complex PstSACB involved in phosphate import. Responsible for energy coupling to the transport system. The chain is Phosphate import ATP-binding protein PstB from Clostridium tetani (strain Massachusetts / E88).